Here is a 156-residue protein sequence, read N- to C-terminus: ATP synthase subunit b (156 aa).

The chain crosses the membrane as a helical span at residues 3 to 23; it reads ITLTIFAQALAFAGLIWIVAT.

Belongs to the ATPase B chain family. F-type ATPases have 2 components, F(1) - the catalytic core - and F(0) - the membrane proton channel. F(1) has five subunits: alpha(3), beta(3), gamma(1), delta(1), epsilon(1). F(0) has three main subunits: a(1), b(2) and c(10-14). The alpha and beta chains form an alternating ring which encloses part of the gamma chain. F(1) is attached to F(0) by a central stalk formed by the gamma and epsilon chains, while a peripheral stalk is formed by the delta and b chains.

The protein resides in the cell inner membrane. Functionally, f(1)F(0) ATP synthase produces ATP from ADP in the presence of a proton or sodium gradient. F-type ATPases consist of two structural domains, F(1) containing the extramembraneous catalytic core and F(0) containing the membrane proton channel, linked together by a central stalk and a peripheral stalk. During catalysis, ATP synthesis in the catalytic domain of F(1) is coupled via a rotary mechanism of the central stalk subunits to proton translocation. Its function is as follows. Component of the F(0) channel, it forms part of the peripheral stalk, linking F(1) to F(0). The sequence is that of ATP synthase subunit b from Xanthomonas axonopodis pv. citri (strain 306).